A 548-amino-acid chain; its full sequence is Non-structural protein NS1 (548 aa).

This sequence belongs to the orbivirus non-structural protein NS1 family.

The polypeptide is Non-structural protein NS1 (Segment-5) (Camelus dromedarius (Dromedary)).